A 76-amino-acid polypeptide reads, in one-letter code: Small ribosomal subunit protein bS18 (76 aa).

This sequence belongs to the bacterial ribosomal protein bS18 family. As to quaternary structure, part of the 30S ribosomal subunit. Forms a tight heterodimer with protein bS6.

Functionally, binds as a heterodimer with protein bS6 to the central domain of the 16S rRNA, where it helps stabilize the platform of the 30S subunit. The polypeptide is Small ribosomal subunit protein bS18 (Xylella fastidiosa (strain 9a5c)).